The sequence spans 354 residues: CREB/ATF bZIP transcription factor (354 aa).

Disordered regions lie at residues 1-95 (MRHS…PGEE), 113-156 (PRQP…AAEM), and 171-214 (GGCS…RKAA). Phosphoserine is present on Ser50. The span at 121 to 132 (DPGLSSPGPLSS) shows a compositional bias: low complexity. Gly residues-rich tracts occupy residues 133–143 (SGGGSDSGGLW) and 190–199 (PGGGGGGGSG). One can recognise a bZIP domain in the interval 204 to 267 (QAATKSPRKA…QALQEESRYL (64 aa)). Positions 205–214 (AATKSPRKAA) are enriched in low complexity. A basic motif region spans residues 219–226 (RLNRLKKK). The segment at 232-267 (LESRVRGLAAENQELRAENRELGKRVQALQEESRYL) is leucine-zipper. Residues 303-306 (DHDY) carry the HCFC1-binding motif (HBM) motif.

It belongs to the bZIP family. ATF subfamily. Interacts with HCFC1; the interaction inhibits CREB3 transcriptional activity. Interacts with CREB3; the interaction occurs only in combination with HCFC1. As to expression, in adults, expressed most abundantly in heart, liver and skeletal muscle, moderately abundant in kidney and pancreas, and barely detectable in lung. In fetal tissues, expressed most abundantly in kidney and very low amounts in heart, lung and liver.

It is found in the nucleus. Strongly activates transcription when bound to HCFC1. Suppresses the expression of HSV proteins in cells infected with the virus in a HCFC1-dependent manner. Also suppresses the HCFC1-dependent transcriptional activation by CREB3 and reduces the amount of CREB3 in the cell. Able to down-regulate expression of some cellular genes in CREBZF-expressing cells. The protein is CREB/ATF bZIP transcription factor (CREBZF) of Homo sapiens (Human).